The following is a 300-amino-acid chain: Cytochrome b (300 aa).

6 consecutive transmembrane segments (helical) span residues 28–48 (YGFL…LLAL), 72–94 (WCFR…LHIL), 107–127 (SWIS…YGYV), 168–187 (FFVF…FGIL), 223–243 (IPNK…LFLL), and 279–299 (IGCQ…YIIL). 2 residues coordinate heme b: H78 and H92.

This sequence belongs to the cytochrome b family. As to quaternary structure, the main subunits of complex b-c1 are: cytochrome b, cytochrome c1 and the Rieske protein. It depends on heme b as a cofactor.

The protein localises to the mitochondrion inner membrane. In terms of biological role, component of the ubiquinol-cytochrome c reductase complex (complex III or cytochrome b-c1 complex) that is part of the mitochondrial respiratory chain. The b-c1 complex mediates electron transfer from ubiquinol to cytochrome c. Contributes to the generation of a proton gradient across the mitochondrial membrane that is then used for ATP synthesis. The sequence is that of Cytochrome b (MT-CYB) from Plasmodium gallinaceum.